Consider the following 275-residue polypeptide: COP9 signalosome complex subunit 7a (275 aa).

Ser-2 bears the N-acetylserine mark. One can recognise a PCI domain in the interval 2–159 (SAEVKVTGQN…QRLEVDYSIG (158 aa)). The stretch at 185 to 233 (LSGIEEQVSRANQHKEQQLGLKQQIESEVANLKKTIKVTTAAAAAATSQ) forms a coiled coil. Positions 228 to 275 (AAATSQDPEQHLTELREPASGTNQRQPSKKASKGKGLRGSAKIWSKSN) are disordered. Positions 235-244 (PEQHLTELRE) are enriched in basic and acidic residues. A compositionally biased stretch (basic residues) spans 254–263 (PSKKASKGKG).

It belongs to the CSN7/EIF3M family. CSN7 subfamily. As to quaternary structure, component of the CSN complex, composed of COPS1/GPS1, COPS2, COPS3, COPS4, COPS5, COPS6, COPS7 (COPS7A or COPS7B), COPS8 and COPS9. In the complex, it probably interacts directly with COPS1, COPS2, COPS4, COPS5, COPS6 and COPS8. Interacts with PMF1. Interacts with the translation initiation factor EIF3S6. Interacts with CK2 and PKD. Interacts directly with ID3. Phosphorylated by CK2 and PKD kinases.

It is found in the cytoplasm. The protein resides in the nucleus. Functionally, component of the COP9 signalosome complex (CSN), a complex involved in various cellular and developmental processes. The CSN complex is an essential regulator of the ubiquitin (Ubl) conjugation pathway by mediating the deneddylation of the cullin subunits of SCF-type E3 ligase complexes, leading to decrease the Ubl ligase activity of SCF-type complexes such as SCF, CSA or DDB2. The complex is also involved in phosphorylation of p53/TP53, JUN, I-kappa-B-alpha/NFKBIA, ITPK1 and IRF8/ICSBP, possibly via its association with CK2 and PKD kinases. CSN-dependent phosphorylation of TP53 and JUN promotes and protects degradation by the Ubl system, respectively. The sequence is that of COP9 signalosome complex subunit 7a (Cops7a) from Mus musculus (Mouse).